A 587-amino-acid polypeptide reads, in one-letter code: Polyadenylate-binding protein-interacting protein 3 (587 aa).

Residues 51–132 (LLVYFTTCNI…LVQVIAKDLP (82 aa)) enclose the Sm domain. The disordered stretch occupies residues 422-503 (AKSENSSGWP…QSPQSPVFDG (82 aa)). A compositionally biased stretch (low complexity) spans 431 to 464 (PGSSISRNSENSAASSASNLPILSPSSSGSLSSE). The PAM2-like 1; degenerate signature appears at 467–475 (TLNPNAKEF). Positions 476–486 (KLNPNAKSFKP) match the PAM2-like 2 motif. Residues 486 to 498 (PSPSATRPQSPQS) are compositionally biased toward polar residues.

The polypeptide is Polyadenylate-binding protein-interacting protein 3 (CID3) (Arabidopsis thaliana (Mouse-ear cress)).